The primary structure comprises 231 residues: Large ribosomal subunit protein uL1 (231 aa).

It belongs to the universal ribosomal protein uL1 family. Part of the 50S ribosomal subunit.

In terms of biological role, binds directly to 23S rRNA. The L1 stalk is quite mobile in the ribosome, and is involved in E site tRNA release. Protein L1 is also a translational repressor protein, it controls the translation of the L11 operon by binding to its mRNA. The protein is Large ribosomal subunit protein uL1 of Desulforudis audaxviator (strain MP104C).